A 216-amino-acid chain; its full sequence is UPF0323 lipoprotein HPG27_212 (216 aa).

Positions Met-1–Gly-27 are cleaved as a signal peptide. Cys-28 is lipidated: N-palmitoyl cysteine. Cys-28 is lipidated: S-diacylglycerol cysteine. Residues Gln-159–Arg-170 are compositionally biased toward polar residues. A disordered region spans residues Gln-159 to Ser-216. Residues Ser-171 to Ser-209 are compositionally biased toward low complexity.

The protein belongs to the UPF0323 family.

It is found in the cell membrane. This chain is UPF0323 lipoprotein HPG27_212, found in Helicobacter pylori (strain G27).